The following is a 123-amino-acid chain: MKKSGLLNPDLCYAIARLGHTDTWAVADCGLPIPEHVEIIDLALVFGIPTFEQVLNALKPEVVVEGAVIAEGTPERIREMVDTDVEVVTHEELKAQLAECAFVIRTGETTAYANVIFKSGVAF.

The active-site Proton donor is H20. Residues D28, H90, and 112–114 each bind substrate; that span reads YAN.

This sequence belongs to the RbsD / FucU family. RbsD subfamily. In terms of assembly, homodecamer.

It localises to the cytoplasm. It catalyses the reaction beta-D-ribopyranose = beta-D-ribofuranose. It functions in the pathway carbohydrate metabolism; D-ribose degradation; D-ribose 5-phosphate from beta-D-ribopyranose: step 1/2. Its function is as follows. Catalyzes the interconversion of beta-pyran and beta-furan forms of D-ribose. This Corynebacterium glutamicum (strain R) protein is D-ribose pyranase.